A 339-amino-acid chain; its full sequence is D-erythrose-4-phosphate dehydrogenase (339 aa).

11–12 (RI) provides a ligand contact to NAD(+). Residues 153 to 155 (SCT), Arg199, 212 to 213 (TK), and Arg235 contribute to the substrate site. Residue Cys154 is the Nucleophile of the active site. Asn317 provides a ligand contact to NAD(+).

Belongs to the glyceraldehyde-3-phosphate dehydrogenase family. Epd subfamily. In terms of assembly, homotetramer.

It localises to the cytoplasm. It catalyses the reaction D-erythrose 4-phosphate + NAD(+) + H2O = 4-phospho-D-erythronate + NADH + 2 H(+). The protein operates within cofactor biosynthesis; pyridoxine 5'-phosphate biosynthesis; pyridoxine 5'-phosphate from D-erythrose 4-phosphate: step 1/5. Its function is as follows. Catalyzes the NAD-dependent conversion of D-erythrose 4-phosphate to 4-phosphoerythronate. The chain is D-erythrose-4-phosphate dehydrogenase from Shewanella halifaxensis (strain HAW-EB4).